Reading from the N-terminus, the 150-residue chain is Depactin (150 aa).

The 146-residue stretch at 3–148 (SGTALDENVK…SEEAIGDKIK (146 aa)) folds into the ADF-H domain.

This sequence belongs to the actin-binding proteins ADF family.

In terms of biological role, depactin interacts with actin at some of its 12 N-terminal residues and 20 C-terminal residues. Binds to actin monomers from filaments and in solution. This chain is Depactin, found in Asterias amurensis (Northern Pacific seastar).